We begin with the raw amino-acid sequence, 341 residues long: Tetraacyldisaccharide 4'-kinase (341 aa).

ATP is bound at residue 65–72; the sequence is TVGGSGKT.

It belongs to the LpxK family.

The catalysed reaction is a lipid A disaccharide + ATP = a lipid IVA + ADP + H(+). The protein operates within glycolipid biosynthesis; lipid IV(A) biosynthesis; lipid IV(A) from (3R)-3-hydroxytetradecanoyl-[acyl-carrier-protein] and UDP-N-acetyl-alpha-D-glucosamine: step 6/6. Its function is as follows. Transfers the gamma-phosphate of ATP to the 4'-position of a tetraacyldisaccharide 1-phosphate intermediate (termed DS-1-P) to form tetraacyldisaccharide 1,4'-bis-phosphate (lipid IVA). The sequence is that of Tetraacyldisaccharide 4'-kinase from Shewanella woodyi (strain ATCC 51908 / MS32).